The primary structure comprises 206 residues: Platelet glycoprotein Ib beta chain (206 aa).

A signal peptide spans 1 to 26 (MGSRPRGALSLLLLLLALLSRPASGC). Disulfide bonds link Cys-26–Cys-32 and Cys-30–Cys-39. The region spanning 27–55 (PAPCSCAGTLVDCGRRGLTWASLPAAFPP) is the LRRNT domain. Residues 27–147 (PAPCSCAGTL…RAACAPGLLC (121 aa)) lie on the Extracellular side of the membrane. One copy of the LRR repeat lies at 60–83 (LVLTGNNLTALPPGLLDALPALRA). A glycan (N-linked (GlcNAc...) asparagine) is linked at Asn-66. The 55-residue stretch at 89 to 143 (NPWRCDCRLLPLRAWLAGRPERAPYRDLRCVAPPALRGRLLPYVAEDELRAACAP) folds into the LRRCT domain. Disulfide bonds link Cys-93/Cys-118 and Cys-95/Cys-141. A helical transmembrane segment spans residues 148 to 172 (WGALVAQLALLVLGLLHALLLALLL). The Cytoplasmic segment spans residues 173-206 (GRLRRLRARARARSIQEFSLTAPLVAESARGGAS). Phosphoserine occurs at positions 186 and 191. Thr-193 carries the phosphothreonine modification. Ser-200 carries the post-translational modification Phosphoserine.

In terms of assembly, two GP-Ib beta are disulfide-linked to one GP-Ib alpha. GP-IX is complexed with the GP-Ib heterodimer via a non covalent linkage. Interacts with TRAF4.

Its subcellular location is the membrane. Gp-Ib, a surface membrane protein of platelets, participates in the formation of platelet plugs by binding to von Willebrand factor, which is already bound to the subendothelium. The protein is Platelet glycoprotein Ib beta chain (Gp1bb) of Mus musculus (Mouse).